The chain runs to 180 residues: Der GTPase-activating protein YihI (180 aa).

2 disordered regions span residues Met1–Arg88 and Pro147–Glu180. Composition is skewed to basic and acidic residues over residues Phe18 to Ser33, Glu50 to Leu67, Val77 to Arg88, and Ala153 to Glu163. Acidic residues predominate over residues Asp164–Asp173.

It belongs to the YihI family. In terms of assembly, interacts with Der.

Functionally, a GTPase-activating protein (GAP) that modifies Der/EngA GTPase function. May play a role in ribosome biogenesis. In Photobacterium profundum (strain SS9), this protein is Der GTPase-activating protein YihI.